Consider the following 109-residue polypeptide: Spermidine export protein MdtI (109 aa).

The next 4 membrane-spanning stretches (helical) occupy residues Trp-6 to Leu-26, Ile-36 to Val-56, Ala-64 to Phe-84, and Leu-88 to Leu-108.

This sequence belongs to the drug/metabolite transporter (DMT) superfamily. Small multidrug resistance (SMR) (TC 2.A.7.1) family. MdtI subfamily. As to quaternary structure, forms a complex with MdtJ.

The protein localises to the cell inner membrane. In terms of biological role, catalyzes the excretion of spermidine. The sequence is that of Spermidine export protein MdtI from Escherichia coli O139:H28 (strain E24377A / ETEC).